The primary structure comprises 200 residues: uncharacterized protein (200 aa).

This is an uncharacterized protein from Amazona oratrix (yellow-headed parrot).